The primary structure comprises 83 residues: Mitotic-spindle organizing protein 1 (83 aa).

It belongs to the MOZART1 family. As to quaternary structure, part of the gamma-tubulin complex.

It localises to the cytoplasm. It is found in the cytoskeleton. The protein resides in the microtubule organizing center. Its subcellular location is the spindle pole body. Required for gamma-tubulin complex recruitment to the microtubule organizing center (MTOC). The chain is Mitotic-spindle organizing protein 1 from Botryotinia fuckeliana (strain B05.10) (Noble rot fungus).